Consider the following 392-residue polypeptide: Cell division protein DivIB (392 aa).

A disordered region spans residues Met1–Glu87. Over Met1–Met131 the chain is Cytoplasmic. Over residues Lys14 to Ala32 the composition is skewed to basic and acidic residues. A compositionally biased stretch (acidic residues) spans Thr58–Asn76. The chain crosses the membrane as a helical span at residues Trp132–Leu152. Residues Ser153 to His224 enclose the POTRA domain. Over Ser153–Asn392 the chain is Extracellular. The interval Ile368 to Asn392 is disordered.

This sequence belongs to the FtsQ/DivIB family. DivIB subfamily.

It localises to the cell membrane. In terms of biological role, cell division protein that may be involved in stabilizing or promoting the assembly of the division complex. This Lactococcus lactis subsp. lactis (strain IL1403) (Streptococcus lactis) protein is Cell division protein DivIB.